The sequence spans 161 residues: Small ribosomal subunit protein uS9 (161 aa).

A compositionally biased stretch (polar residues) spans 1-21 (MATLQSLADLNRANTQTSNPE). The segment at 1 to 25 (MATLQSLADLNRANTQTSNPENEAP) is disordered.

Belongs to the universal ribosomal protein uS9 family.

This Methylorubrum extorquens (strain CM4 / NCIMB 13688) (Methylobacterium extorquens) protein is Small ribosomal subunit protein uS9.